We begin with the raw amino-acid sequence, 204 residues long: Urease accessory protein UreG (204 aa).

GTP is bound at residue 15–22 (GPVGSGKT).

Belongs to the SIMIBI class G3E GTPase family. UreG subfamily. In terms of assembly, homodimer. UreD, UreF and UreG form a complex that acts as a GTP-hydrolysis-dependent molecular chaperone, activating the urease apoprotein by helping to assemble the nickel containing metallocenter of UreC. The UreE protein probably delivers the nickel.

It is found in the cytoplasm. Functionally, facilitates the functional incorporation of the urease nickel metallocenter. This process requires GTP hydrolysis, probably effectuated by UreG. This Methylobacterium sp. (strain 4-46) protein is Urease accessory protein UreG.